The chain runs to 197 residues: Suppressor of RNA silencing p3 (197 aa).

The protein belongs to the tenuiviruses p3 protein family. In terms of assembly, homodimer.

It is found in the host cytoplasm. Functionally, acts as a suppressor of RNA-mediated gene silencing, also known as post-transcriptional gene silencing (PTGS), presumably through the binding of dsRNA. The polypeptide is Suppressor of RNA silencing p3 (Rottboellia (Sorghum)).